Here is a 97-residue protein sequence, read N- to C-terminus: UPF0235 protein HAPS_1504 (97 aa).

The protein belongs to the UPF0235 family.

In Glaesserella parasuis serovar 5 (strain SH0165) (Haemophilus parasuis), this protein is UPF0235 protein HAPS_1504.